The chain runs to 700 residues: Elongation factor G (700 aa).

Residues 10–286 enclose the tr-type G domain; sequence NKVRNIGIMA…AVIDYLPNPL (277 aa). Residues 19-26, 83-87, and 137-140 contribute to the GTP site; these read AHIDAGKT, DTPGH, and NKMD.

Belongs to the TRAFAC class translation factor GTPase superfamily. Classic translation factor GTPase family. EF-G/EF-2 subfamily.

It localises to the cytoplasm. Its function is as follows. Catalyzes the GTP-dependent ribosomal translocation step during translation elongation. During this step, the ribosome changes from the pre-translocational (PRE) to the post-translocational (POST) state as the newly formed A-site-bound peptidyl-tRNA and P-site-bound deacylated tRNA move to the P and E sites, respectively. Catalyzes the coordinated movement of the two tRNA molecules, the mRNA and conformational changes in the ribosome. This Rhodococcus erythropolis (strain PR4 / NBRC 100887) protein is Elongation factor G.